A 516-amino-acid chain; its full sequence is Glucose-1-phosphate adenylyltransferase large subunit 1, chloroplastic/amyloplastic (516 aa).

Residues 1 to 45 (MQFALALDTNSGPHQIRSCEGDGIDRLEKLSIGGRKQEKALRNRC) constitute a chloroplast transit peptide.

The protein belongs to the bacterial/plant glucose-1-phosphate adenylyltransferase family. As to quaternary structure, heterotetramer. As to expression, endosperm.

Its subcellular location is the plastid. It localises to the chloroplast. It is found in the amyloplast. It carries out the reaction alpha-D-glucose 1-phosphate + ATP + H(+) = ADP-alpha-D-glucose + diphosphate. Its pathway is glycan biosynthesis; starch biosynthesis. With respect to regulation, activated by 3'phosphoglycerate, inhibited by orthophosphate. Allosteric regulation. Its function is as follows. This protein plays a role in synthesis of starch. It catalyzes the synthesis of the activated glycosyl donor, ADP-glucose from Glc-1-P and ATP. This Zea mays (Maize) protein is Glucose-1-phosphate adenylyltransferase large subunit 1, chloroplastic/amyloplastic (SH2).